Consider the following 369-residue polypeptide: Phosphoribosyl pyrophosphate synthase-associated protein 2 (369 aa).

M1 bears the N-acetylmethionine mark. Phosphoserine is present on residues S219, S227, and S233.

This sequence belongs to the ribose-phosphate pyrophosphokinase family. As to quaternary structure, binds to PRPS1 and PRPS2. As to expression, ubiquitous.

Functionally, seems to play a negative regulatory role in 5-phosphoribose 1-diphosphate synthesis. This is Phosphoribosyl pyrophosphate synthase-associated protein 2 (Prpsap2) from Rattus norvegicus (Rat).